The sequence spans 214 residues: Adenylate kinase (214 aa).

An ATP-binding site is contributed by 10–15; it reads GAGKGT. Residues 30–59 form an NMP region; that stretch reads ATGDVLRAAVKEGTPLGLEAKAAMDRGDLV. Residues Thr-31, Arg-36, 57 to 59, and Gln-92 each bind AMP; that span reads DLV. The LID stretch occupies residues 126–161; sequence GRTTCEACQRPFFGRQPGETCTEGGVSGTLVRRKDD. Position 127 (Arg-127) interacts with ATP. Residues Arg-158 and Arg-169 each contribute to the AMP site. Gly-198 is an ATP binding site.

This sequence belongs to the adenylate kinase family. In terms of assembly, monomer.

It localises to the cytoplasm. It carries out the reaction AMP + ATP = 2 ADP. It participates in purine metabolism; AMP biosynthesis via salvage pathway; AMP from ADP: step 1/1. Catalyzes the reversible transfer of the terminal phosphate group between ATP and AMP. Plays an important role in cellular energy homeostasis and in adenine nucleotide metabolism. In Gemmatimonas aurantiaca (strain DSM 14586 / JCM 11422 / NBRC 100505 / T-27), this protein is Adenylate kinase.